The sequence spans 106 residues: Small ribosomal subunit protein mS33 (106 aa).

Ser-2 carries the post-translational modification N-acetylserine. A compositionally biased stretch (basic residues) spans 85 to 94; that stretch reads LKKLRGKVKP. Positions 85–106 are disordered; that stretch reads LKKLRGKVKPRKGEGKRAAKKK. Residues 95 to 106 are compositionally biased toward basic and acidic residues; the sequence is RKGEGKRAAKKK.

This sequence belongs to the mitochondrion-specific ribosomal protein mS33 family. As to quaternary structure, component of the mitochondrial ribosome small subunit (28S) which comprises a 12S rRNA and about 30 distinct proteins.

It is found in the mitochondrion. In Bos taurus (Bovine), this protein is Small ribosomal subunit protein mS33.